The sequence spans 49 residues: Large ribosomal subunit protein bL33B (49 aa).

Belongs to the bacterial ribosomal protein bL33 family.

The sequence is that of Large ribosomal subunit protein bL33B from Exiguobacterium sibiricum (strain DSM 17290 / CCUG 55495 / CIP 109462 / JCM 13490 / 255-15).